Consider the following 495-residue polypeptide: Neuronal acetylcholine receptor subunit beta-4 (495 aa).

The signal sequence occupies residues 1-20 (MRGTPLLLVSLFALLQPGDC). Over 21–235 (RLANAEEKLM…IIKRKPLFYT (215 aa)) the chain is Extracellular. N-linked (GlcNAc...) asparagine glycosylation is found at N35, N92, N137, and N165. An intrachain disulfide couples C152 to C166. The helical transmembrane segment at 236–256 (INLIIPCVLITSLAILVFYLP) threads the bilayer. Residues 257 to 264 (SDCGEKMT) are Cytoplasmic-facing. E261 contacts Na(+). A helical transmembrane segment spans residues 265-285 (LCISVLLALTFFLLLISKIVP). The Extracellular segment spans residues 286-297 (PTSLDIPLIGKY). Residues 298 to 318 (LLFTMVLVTFSIVTTVCVLNV) traverse the membrane as a helical segment. The Cytoplasmic portion of the chain corresponds to 319–463 (HHRSPSTHTM…WKFVAMVVDR (145 aa)). Residues 464–484 (LFLWVFVIVCILGTMGLFLPP) traverse the membrane as a helical segment. The Extracellular segment spans residues 485 to 495 (LFQIHAPSKGL).

This sequence belongs to the ligand-gated ion channel (TC 1.A.9) family. Acetylcholine receptor (TC 1.A.9.1) subfamily. Beta-4/CHRNB4 sub-subfamily. As to quaternary structure, neuronal AChR is composed of two different types of subunits: alpha and beta. CHRNB4/Beta-4 subunit can be combined to CHRNA2/alpha-2, CHRNA3/alpha-3 or CHRNA4/alpha-4, CHRNA5/alpha-5 and CHRNB3/beta-3 to give rise to functional receptors. Forms stoichiometries such as (CHRNA3)2:(CHRNB4)3 or (CHRNA3:CHRNB4)2:CHRNB3. Interacts with RIC3; which is required for proper folding and assembly. Interacts with LYPD6. Predominantly expressed by immature T-cells in the thymus.

The protein resides in the synaptic cell membrane. It is found in the cell membrane. The enzyme catalyses K(+)(in) = K(+)(out). It catalyses the reaction Na(+)(in) = Na(+)(out). It carries out the reaction Ca(2+)(in) = Ca(2+)(out). With respect to regulation, activated by a myriad of ligands such as acetylcholine, cytisine, nicotine, choline and epibatidine. The heteropentamer CHRNA3:CHRNB4 activity is blocked by the alpha-conotoxin ImI and AuIB. Component of neuronal acetylcholine receptors (nAChRs) that function as pentameric, ligand-gated cation channels with high calcium permeability among other activities. nAChRs are excitatory neurotrasnmitter receptors formed by a collection of nAChR subunits known to mediate synaptic transmission in the nervous system and the neuromuscular junction. Each nAchR subunit confers differential attributes to channel properties, including activation, deactivation and desensitization kinetics, pH sensitivity, cation permeability, and binding to allosteric modulators. CHRNB4 forms heteropentameric neuronal acetylcholine receptors with CHRNA2, CHRNA3 and CHRNA4, as well as CHRNA5 and CHRNB3 as accesory subunits. CHRNA3:CHRNB4 being predominant in neurons of the autonomic ganglia, it is known as ganglionic nicotinic receptor. CHRNA3:CHRNB4 or CHRNA3:CHRNA5:CHRNB4 play also an important role in the habenulo-interpeduncular tract, modulating the mesolimbic dopamine system and affecting reward circuits and addiction. Hypothalamic CHRNA3:CHRNB4 nAChR activation by nicotine leads to activation of POMC neurons and a decrease in food intake. The polypeptide is Neuronal acetylcholine receptor subunit beta-4 (Chrnb4) (Mus musculus (Mouse)).